Reading from the N-terminus, the 213-residue chain is Imidazole glycerol phosphate synthase subunit HisH 2 (213 aa).

The Glutamine amidotransferase type-1 domain occupies 4–211 (RLGLIDYGMG…LNWLETGAKP (208 aa)). The active-site Nucleophile is the C82. Catalysis depends on residues H186 and E188.

As to quaternary structure, heterodimer of HisH and HisF.

It is found in the cytoplasm. The enzyme catalyses 5-[(5-phospho-1-deoxy-D-ribulos-1-ylimino)methylamino]-1-(5-phospho-beta-D-ribosyl)imidazole-4-carboxamide + L-glutamine = D-erythro-1-(imidazol-4-yl)glycerol 3-phosphate + 5-amino-1-(5-phospho-beta-D-ribosyl)imidazole-4-carboxamide + L-glutamate + H(+). The catalysed reaction is L-glutamine + H2O = L-glutamate + NH4(+). Its pathway is amino-acid biosynthesis; L-histidine biosynthesis; L-histidine from 5-phospho-alpha-D-ribose 1-diphosphate: step 5/9. Functionally, IGPS catalyzes the conversion of PRFAR and glutamine to IGP, AICAR and glutamate. The HisH subunit provides the glutamine amidotransferase activity that produces the ammonia necessary to HisF for the synthesis of IGP and AICAR. In Prochlorococcus marinus (strain MIT 9313), this protein is Imidazole glycerol phosphate synthase subunit HisH 2 (hisH2).